The chain runs to 107 residues: Proteinase inhibitor I-B (107 aa).

Positions M1–A22 are cleaved as a signal peptide. The propeptide occupies R23–C39.

Belongs to the protease inhibitor I13 (potato type I serine protease inhibitor) family.

The protein localises to the secreted. The sequence is that of Proteinase inhibitor I-B (TIMPA) from Nicotiana tabacum (Common tobacco).